The primary structure comprises 513 residues: Nitrate transporter 2.2 (513 aa).

Helical transmembrane passes span tryptophan 38–isoleucine 58, valine 74–valine 94, tyrosine 98–threonine 118, phenylalanine 128–phenylalanine 148, alanine 158–isoleucine 178, alanine 196–isoleucine 216, leucine 247–valine 265, phenylalanine 281–phenylalanine 301, leucine 323–valine 343, isoleucine 351–isoleucine 371, valine 383–phenylalanine 403, and phenylalanine 419–proline 439.

It belongs to the major facilitator superfamily. Nitrate/nitrite porter (TC 2.A.1.8) family.

The protein localises to the cell membrane. Functionally, involved in nitrate transport, but does not seem to be able to mediate transport by its own. Acts as a dual component transporter with NAR2 (system 2). Involved in a high affinity transport specific for nitrate. The polypeptide is Nitrate transporter 2.2 (Chlamydomonas reinhardtii (Chlamydomonas smithii)).